The sequence spans 473 residues: Bifunctional protein GlmU (473 aa).

Residues 1 to 240 form a pyrophosphorylase region; that stretch reads MAIHPLDVVI…AAQVAGVNSP (240 aa). UDP-N-acetyl-alpha-D-glucosamine-binding positions include Lys-25, Gln-83, 88–89, 110–112, Gly-147, Glu-165, and Asn-238; these read GT and SGD. Asp-112 contacts Mg(2+). Residue Asn-238 participates in Mg(2+) binding. Residues 241–261 are linker; it reads VQLAELERVYQQRLATTLMEQ. The interval 262-473 is N-acetyltransferase; the sequence is GVRLADPARL…WARPVKKPGV (212 aa). Arg-348 and Lys-366 together coordinate UDP-N-acetyl-alpha-D-glucosamine. The active-site Proton acceptor is the His-378. Residues Tyr-381 and Asn-392 each contribute to the UDP-N-acetyl-alpha-D-glucosamine site. Acetyl-CoA contacts are provided by residues Ala-395, 401 to 402, Ser-420, Gly-438, and Arg-455; that span reads NY.

It in the N-terminal section; belongs to the N-acetylglucosamine-1-phosphate uridyltransferase family. In the C-terminal section; belongs to the transferase hexapeptide repeat family. Homotrimer. Requires Mg(2+) as cofactor.

The protein localises to the cytoplasm. It catalyses the reaction alpha-D-glucosamine 1-phosphate + acetyl-CoA = N-acetyl-alpha-D-glucosamine 1-phosphate + CoA + H(+). The enzyme catalyses N-acetyl-alpha-D-glucosamine 1-phosphate + UTP + H(+) = UDP-N-acetyl-alpha-D-glucosamine + diphosphate. It participates in nucleotide-sugar biosynthesis; UDP-N-acetyl-alpha-D-glucosamine biosynthesis; N-acetyl-alpha-D-glucosamine 1-phosphate from alpha-D-glucosamine 6-phosphate (route II): step 2/2. It functions in the pathway nucleotide-sugar biosynthesis; UDP-N-acetyl-alpha-D-glucosamine biosynthesis; UDP-N-acetyl-alpha-D-glucosamine from N-acetyl-alpha-D-glucosamine 1-phosphate: step 1/1. The protein operates within bacterial outer membrane biogenesis; LPS lipid A biosynthesis. Functionally, catalyzes the last two sequential reactions in the de novo biosynthetic pathway for UDP-N-acetylglucosamine (UDP-GlcNAc). The C-terminal domain catalyzes the transfer of acetyl group from acetyl coenzyme A to glucosamine-1-phosphate (GlcN-1-P) to produce N-acetylglucosamine-1-phosphate (GlcNAc-1-P), which is converted into UDP-GlcNAc by the transfer of uridine 5-monophosphate (from uridine 5-triphosphate), a reaction catalyzed by the N-terminal domain. The polypeptide is Bifunctional protein GlmU (Polaromonas naphthalenivorans (strain CJ2)).